We begin with the raw amino-acid sequence, 418 residues long: Nucleoredoxin (418 aa).

The Thioredoxin domain maps to 109–309 (KYKVTSIPSL…ESNAVQLHEG (201 aa)).

Belongs to the nucleoredoxin family.

It is found in the cytoplasm. It localises to the cytosol. Its subcellular location is the nucleus. The catalysed reaction is [protein]-dithiol + NAD(+) = [protein]-disulfide + NADH + H(+). It carries out the reaction [protein]-dithiol + NADP(+) = [protein]-disulfide + NADPH + H(+). Functions as a redox-dependent negative regulator of the Wnt signaling pathway. The chain is Nucleoredoxin (nxn) from Danio rerio (Zebrafish).